The following is a 165-amino-acid chain: Sporulation-specific cell division protein SsgB (165 aa).

Residues Met1–Glu21 form a disordered region.

It belongs to the SsgA family. In terms of assembly, interacts with SsgA. Interacts with FtsZ (via N-terminus).

The protein localises to the cell septum. Its function is as follows. Involved in sporulation-specific cell division. Required for early stages of sporulation. Important in the process of growth cessation prior to sporulation-specific cell division. Recruits cell division protein FtsZ to the future septum sites and tethers the contractile ring structure (Z ring) to the cytoplasmic membrane during sporulation. Stimulates polymerization and filament length of FtsZ in vitro. The polypeptide is Sporulation-specific cell division protein SsgB (Kineococcus radiotolerans (strain ATCC BAA-149 / DSM 14245 / SRS30216)).